The following is a 120-amino-acid chain: Urease subunit beta (120 aa).

It belongs to the urease beta subunit family. Heterotrimer of UreA (gamma), UreB (beta) and UreC (alpha) subunits. Three heterotrimers associate to form the active enzyme.

The protein resides in the cytoplasm. It catalyses the reaction urea + 2 H2O + H(+) = hydrogencarbonate + 2 NH4(+). It participates in nitrogen metabolism; urea degradation; CO(2) and NH(3) from urea (urease route): step 1/1. This Corynebacterium efficiens (strain DSM 44549 / YS-314 / AJ 12310 / JCM 11189 / NBRC 100395) protein is Urease subunit beta.